The chain runs to 1040 residues: Multidrug resistance protein MdtB (1040 aa).

Transmembrane regions (helical) follow at residues 16–36, 347–367, 369–389, 396–416, 440–460, 472–492, 537–557, 863–883, 888–908, 911–931, 968–988, and 998–1018; these read FIMRPVATTLLMVAILLAGII, LMMAITLVVMIIYLFLRNIPA, IIPGVAVPLSLIGTFAVMVFL, LTLMALTIATGFVVDDAIVVI, IGFTIISLTFSLIAVLIPLLF, FAITLAVAILISAVVSLTLTP, WLTLSVALSTLLLSVLLWVFI, LGSTVWLIVAAVVAMYIVLGI, FIHPITILSTLPTAGVGALLA, IAGSELDVIAIIGIILLIGIV, ILMTTLAALLGALPLMLSTGV, and IGMVGGLIVSQVLTLFTTPVI.

It belongs to the resistance-nodulation-cell division (RND) (TC 2.A.6) family. MdtB subfamily. Part of a tripartite efflux system composed of MdtA, MdtB and MdtC. MdtB forms a heteromultimer with MdtC.

It localises to the cell inner membrane. Its function is as follows. The MdtABC tripartite complex confers resistance against novobiocin and deoxycholate. The chain is Multidrug resistance protein MdtB from Escherichia coli O157:H7 (strain EC4115 / EHEC).